The following is a 290-amino-acid chain: Transcription cofactor vestigial-like protein 4 (290 aa).

Met1 is modified (N-acetylmethionine). The segment covering 17-30 (ADDEKREAALRGEP) has biased composition (basic and acidic residues). Disordered regions lie at residues 17-65 (ADDE…PGDE), 85-106 (LNKT…SPIE), 140-161 (LDAS…QQNR), and 254-290 (AAKD…SVVS). Position 52 is a phosphoserine (Ser52). Basic and acidic residues predominate over residues 92 to 105 (DCRRDPRERSRSPI). Ser149 carries the post-translational modification Phosphoserine. Residues 150 to 161 (PTLTPGERQQNR) show a composition bias toward polar residues. Thr153 carries the post-translational modification Phosphothreonine. Positions 272–290 (PASPSAHMVSHSHSPSVVS) are enriched in low complexity. Phosphoserine is present on Ser274.

It belongs to the vestigial family. In terms of assembly, interacts with TEFs. Interacts with IRF2BP2.

The protein resides in the nucleus. Its function is as follows. May act as a specific coactivator for the mammalian TEFs. This chain is Transcription cofactor vestigial-like protein 4, found in Homo sapiens (Human).